The chain runs to 408 residues: Multidrug resistance protein MdtG (408 aa).

A run of 10 helical transmembrane segments spans residues 16–36 (LIVAWLGCFLTGAAFSLVMPF), 58–78 (IVFSITFLFSAIASPFWGGLA), 92–112 (LGMGIVMVLMGLAQNIWQFLI), 115–135 (ALLGLLGGFVPNANALIATQV), 146–166 (TLSTGGVSGALLGPMAGGLLA), 173–193 (PVFFITASVLILCFFVTLFCI), 224–244 (LFVTTLIIQVATGSIAPILTL), 256–276 (VAFISGMIASVPGVAALLSAP), 290–310 (ILITALIFSVLLLIPMSYVQT), and 378–398 (AVFLVTAGVVLFNAVYSWNSL).

It belongs to the major facilitator superfamily. DHA1 family. MdtG (TC 2.A.1.2.20) subfamily.

Its subcellular location is the cell inner membrane. Its function is as follows. Confers resistance to fosfomycin and deoxycholate. This chain is Multidrug resistance protein MdtG, found in Escherichia coli O17:K52:H18 (strain UMN026 / ExPEC).